Here is a 462-residue protein sequence, read N- to C-terminus: beta-Tubulin at 65B (462 aa).

GTP is bound by residues E70, S137, G141, T142, G143, N203, and N225. E70 is a binding site for Mg(2+). Positions 420 to 462 (DYRSSAEGEDSGGGGGGGGGRSGSAESGEEEATPEAHCQYCTE) are disordered. Gly residues predominate over residues 430–441 (SGGGGGGGGGRS).

The protein belongs to the tubulin family. Dimer of alpha and beta chains. A typical microtubule is a hollow water-filled tube with an outer diameter of 25 nm and an inner diameter of 15 nM. Alpha-beta heterodimers associate head-to-tail to form protofilaments running lengthwise along the microtubule wall with the beta-tubulin subunit facing the microtubule plus end conferring a structural polarity. Microtubules usually have 13 protofilaments but different protofilament numbers can be found in some organisms and specialized cells. It depends on Mg(2+) as a cofactor.

The protein resides in the cytoplasm. It is found in the cytoskeleton. Functionally, tubulin is the major constituent of microtubules, a cylinder consisting of laterally associated linear protofilaments composed of alpha- and beta-tubulin heterodimers. Microtubules grow by the addition of GTP-tubulin dimers to the microtubule end, where a stabilizing cap forms. Below the cap, tubulin dimers are in GDP-bound state, owing to GTPase activity of alpha-tubulin. This is beta-Tubulin at 65B from Drosophila melanogaster (Fruit fly).